Consider the following 451-residue polypeptide: L-seryl-tRNA(Sec) selenium transferase (451 aa).

At lysine 286 the chain carries N6-(pyridoxal phosphate)lysine.

This sequence belongs to the SelA family. Requires pyridoxal 5'-phosphate as cofactor.

Its subcellular location is the cytoplasm. It catalyses the reaction L-seryl-tRNA(Sec) + selenophosphate + H(+) = L-selenocysteinyl-tRNA(Sec) + phosphate. Its pathway is aminoacyl-tRNA biosynthesis; selenocysteinyl-tRNA(Sec) biosynthesis; selenocysteinyl-tRNA(Sec) from L-seryl-tRNA(Sec) (bacterial route): step 1/1. Converts seryl-tRNA(Sec) to selenocysteinyl-tRNA(Sec) required for selenoprotein biosynthesis. The chain is L-seryl-tRNA(Sec) selenium transferase from Aliarcobacter butzleri (strain RM4018) (Arcobacter butzleri).